The sequence spans 415 residues: Serine hydroxymethyltransferase (415 aa).

Residues Leu-117 and 121–123 (GHL) each bind (6S)-5,6,7,8-tetrahydrofolate. Lys-226 is modified (N6-(pyridoxal phosphate)lysine). Residues Glu-241 and 349 to 351 (SPF) each bind (6S)-5,6,7,8-tetrahydrofolate.

The protein belongs to the SHMT family. Homodimer. It depends on pyridoxal 5'-phosphate as a cofactor.

It is found in the cytoplasm. The enzyme catalyses (6R)-5,10-methylene-5,6,7,8-tetrahydrofolate + glycine + H2O = (6S)-5,6,7,8-tetrahydrofolate + L-serine. It functions in the pathway one-carbon metabolism; tetrahydrofolate interconversion. It participates in amino-acid biosynthesis; glycine biosynthesis; glycine from L-serine: step 1/1. Its function is as follows. Catalyzes the reversible interconversion of serine and glycine with tetrahydrofolate (THF) serving as the one-carbon carrier. This reaction serves as the major source of one-carbon groups required for the biosynthesis of purines, thymidylate, methionine, and other important biomolecules. Also exhibits THF-independent aldolase activity toward beta-hydroxyamino acids, producing glycine and aldehydes, via a retro-aldol mechanism. The sequence is that of Serine hydroxymethyltransferase from Trichlorobacter lovleyi (strain ATCC BAA-1151 / DSM 17278 / SZ) (Geobacter lovleyi).